A 203-amino-acid chain; its full sequence is Small ribosomal subunit protein uS4 (203 aa).

An S4 RNA-binding domain is found at arginine 93 to aspartate 154.

This sequence belongs to the universal ribosomal protein uS4 family. Part of the 30S ribosomal subunit. Contacts protein S5. The interaction surface between S4 and S5 is involved in control of translational fidelity.

Its function is as follows. One of the primary rRNA binding proteins, it binds directly to 16S rRNA where it nucleates assembly of the body of the 30S subunit. Functionally, with S5 and S12 plays an important role in translational accuracy. The chain is Small ribosomal subunit protein uS4 from Chlorobium luteolum (strain DSM 273 / BCRC 81028 / 2530) (Pelodictyon luteolum).